A 473-amino-acid polypeptide reads, in one-letter code: Photosystem II CP43 reaction center protein (473 aa).

Positions methionine 1–glutamate 14 are excised as a propeptide. N-acetylthreonine is present on threonine 15. Residue threonine 15 is modified to Phosphothreonine. 5 helical membrane passes run leucine 69–alanine 93, leucine 134–asparagine 155, lysine 178–threonine 200, lysine 255–serine 275, and tryptophan 291–alanine 312. A [CaMn4O5] cluster-binding site is contributed by glutamate 367. The helical transmembrane segment at arginine 447–proline 471 threads the bilayer.

The protein belongs to the PsbB/PsbC family. PsbC subfamily. As to quaternary structure, PSII is composed of 1 copy each of membrane proteins PsbA, PsbB, PsbC, PsbD, PsbE, PsbF, PsbH, PsbI, PsbJ, PsbK, PsbL, PsbM, PsbT, PsbX, PsbY, PsbZ, Psb30/Ycf12, at least 3 peripheral proteins of the oxygen-evolving complex and a large number of cofactors. It forms dimeric complexes. Binds multiple chlorophylls and provides some of the ligands for the Ca-4Mn-5O cluster of the oxygen-evolving complex. It may also provide a ligand for a Cl- that is required for oxygen evolution. PSII binds additional chlorophylls, carotenoids and specific lipids. is required as a cofactor.

Its subcellular location is the plastid. It is found in the chloroplast thylakoid membrane. In terms of biological role, one of the components of the core complex of photosystem II (PSII). It binds chlorophyll and helps catalyze the primary light-induced photochemical processes of PSII. PSII is a light-driven water:plastoquinone oxidoreductase, using light energy to abstract electrons from H(2)O, generating O(2) and a proton gradient subsequently used for ATP formation. The protein is Photosystem II CP43 reaction center protein of Nicotiana tabacum (Common tobacco).